Reading from the N-terminus, the 206-residue chain is Probable glutathione S-transferase 7 (206 aa).

A GST N-terminal domain is found at 2–79; it reads VHYKVSYFPI…YLARQFGING (78 aa). Glutathione-binding positions include tyrosine 8, tryptophan 39, lysine 43, 49 to 51, and 63 to 64; these read GQL and QS. The 126-residue stretch at 81 to 206 folds into the GST C-terminal domain; it reads CAWEEAQVNS…WLETRPVTPF (126 aa).

The protein belongs to the GST superfamily. Sigma family.

The catalysed reaction is RX + glutathione = an S-substituted glutathione + a halide anion + H(+). In terms of biological role, conjugation of reduced glutathione to a wide number of exogenous and endogenous hydrophobic electrophiles. May play a role in the detoxification of reactive oxygen species produced during pathogenic bacterial infection. The sequence is that of Probable glutathione S-transferase 7 (gst-7) from Caenorhabditis elegans.